The sequence spans 626 residues: tRNA uridine 5-carboxymethylaminomethyl modification enzyme MnmG (626 aa).

14-19 (GAGHAG) provides a ligand contact to FAD. Residue 273–287 (GPRYCPSIEDKVVRF) participates in NAD(+) binding.

This sequence belongs to the MnmG family. As to quaternary structure, homodimer. Heterotetramer of two MnmE and two MnmG subunits. FAD is required as a cofactor.

The protein resides in the cytoplasm. In terms of biological role, NAD-binding protein involved in the addition of a carboxymethylaminomethyl (cmnm) group at the wobble position (U34) of certain tRNAs, forming tRNA-cmnm(5)s(2)U34. The polypeptide is tRNA uridine 5-carboxymethylaminomethyl modification enzyme MnmG (Caldicellulosiruptor saccharolyticus (strain ATCC 43494 / DSM 8903 / Tp8T 6331)).